Reading from the N-terminus, the 441-residue chain is Probable cytosolic Fe-S cluster assembly factor v1g210509 (441 aa).

[4Fe-4S] cluster is bound by residues Cys-24, Cys-72, Cys-75, Cys-78, Cys-196, Cys-252, and Cys-401.

The protein belongs to the NARF family.

Functionally, component of the cytosolic iron-sulfur (Fe/S) protein assembly machinery. Required for maturation of extramitochondrial Fe/S proteins. The sequence is that of Probable cytosolic Fe-S cluster assembly factor v1g210509 from Nematostella vectensis (Starlet sea anemone).